The sequence spans 520 residues: Calcium and calcium/calmodulin-dependent serine/threonine-protein kinase (520 aa).

In terms of domain architecture, Protein kinase spans 13 to 302 (YEVVDVLGKG…ANDLLKHPWV (290 aa)). Residues 19-27 (LGKGGFSVV) and lysine 44 each bind ATP. Aspartate 167 functions as the Proton acceptor in the catalytic mechanism. A helical membrane pass occupies residues 227-243 (MWSLGVILYILLSGCPP). Threonine 267 carries the post-translational modification Phosphothreonine; by autocatalysis. A calmodulin-binding region spans residues 325–338 (ARRKLRAAAIASVL). Residues 346–368 (TKKLKNLLGSHDMKSEELENLRA) adopt a coiled-coil conformation. EF-hand domains follow at residues 361–395 (EELENLRAHFKRICANGDNATLPEFEEVLKAMKMN), 396–431 (SLIPLAPRVFDLFDNNRDGTIDMREILCGLSNLRNS), 432–467 (QGDDALQLCFQMYDADRSGCISKEELASMLRALPED), and 474–509 (TEPGKLDEIFDQMDANSDGVVTFDEFKAAMQRDSSL). Residues aspartate 409, asparagine 411, aspartate 413, threonine 415, glutamate 420, aspartate 445, aspartate 447, serine 449, cysteine 451, glutamate 456, aspartate 487, asparagine 489, aspartate 491, and glutamate 498 each contribute to the Ca(2+) site.

It belongs to the protein kinase superfamily. CAMK Ser/Thr protein kinase family. CaMK subfamily. In terms of processing, autophosphorylation stimulated by calcium and inhibited by calcium/calmodulin. Occurs probably by an intermolecular mechanism.

Its subcellular location is the membrane. The enzyme catalyses L-seryl-[protein] + ATP = O-phospho-L-seryl-[protein] + ADP + H(+). It catalyses the reaction L-threonyl-[protein] + ATP = O-phospho-L-threonyl-[protein] + ADP + H(+). With respect to regulation, activated by calcium/calmodulin binding after calcium-induced autophosphorylation. Autophosphorylation is associated with a time-dependent loss of kinase activity sensitive to reaction pH and ATP concentration. In vitro inactivation leads to the formation of network-like structures. Its function is as follows. Protein kinase that may be involved in microsporogenesis. This chain is Calcium and calcium/calmodulin-dependent serine/threonine-protein kinase (CCAMK), found in Lilium longiflorum (Trumpet lily).